Consider the following 207-residue polypeptide: MRLESVAKFHSPKSPMMSDSPRATASDSLSGTDVMAAMGMAQSQAGFGMAAFCGKHELSQNDKQKAINYLMQFAHKVSGKYCGVAKLEGNTKAKVLQVLATFAYADYCRSAATPGARCRNCHGTGRAVDIAKTEQWGRVVEKECGRCKGVGYSRMPASAAYRAVTMLIPNLTQPTWSRTVKPLYDALVVQCHKEESIADNILNAVTR.

The segment at 1–28 is disordered; that stretch reads MRLESVAKFHSPKSPMMSDSPRATASDS. Residues Cys-118, Cys-121, Cys-144, and Cys-147 each coordinate Zn(2+). A zinc finger lies at 118–147; that stretch reads CRNCHGTGRAVDIAKTEQWGRVVEKECGRC. The DNA-binding element occupies 171 to 192; the sequence is LTQPTWSRTVKPLYDALVVQCH.

This sequence belongs to the phage antitermination Q type 2 family. Interacts with host RPOB (via flap domain); this interaction renders host RNAP resistant to transcription pausing and allows it to read through termination signals. Interacts with host RNA polymerase sigma factor RPOD (via domain-4). Interacts with host NusA (via N-terminus and AR2 domain); this interaction releases the autoinhibition of NusA.

Mediates the switch from middle to viral late gene expression by associating with host RNA polymerase (RNAP) so that the latter can read without pausing and through transcription terminators preceding late genes. Competes with host factor sigma 70 for binding to RPOB, the beta-subunit of host RNAP. To join the elongation complex, binds a specific DNA Q-binding element (QBE) and interacts with RNAP that is paused during early elongation. Participates in the lysis-lysogeny decision by activating the expression of the late lytic genes. The polypeptide is Antitermination protein Q (23) (Salmonella typhimurium).